We begin with the raw amino-acid sequence, 340 residues long: Putative cystathionine beta-lyase (340 aa).

Position 208 is an N6-(pyridoxal phosphate)lysine (K208).

It belongs to the trans-sulfuration enzymes family. Requires pyridoxal 5'-phosphate as cofactor.

It carries out the reaction L,L-cystathionine + H2O = L-homocysteine + pyruvate + NH4(+). The enzyme catalyses an S-substituted L-cysteine + H2O = a thiol + pyruvate + NH4(+). Its pathway is amino-acid biosynthesis; L-methionine biosynthesis via de novo pathway; L-homocysteine from L-cystathionine: step 1/1. This is Putative cystathionine beta-lyase (IRC7) from Saccharomyces cerevisiae (strain ATCC 204508 / S288c) (Baker's yeast).